A 115-amino-acid chain; its full sequence is Hydrogenase maturation factor HypA (115 aa).

Histidine 2 contributes to the Ni(2+) binding site. The Zn(2+) site is built by cysteine 73, cysteine 76, cysteine 89, and cysteine 92.

It belongs to the HypA/HybF family.

Functionally, involved in the maturation of [NiFe] hydrogenases. Required for nickel insertion into the metal center of the hydrogenase. The protein is Hydrogenase maturation factor HypA of Nitrosospira multiformis (strain ATCC 25196 / NCIMB 11849 / C 71).